Here is a 185-residue protein sequence, read N- to C-terminus: Ribosome-recycling factor (185 aa).

It belongs to the RRF family.

The protein resides in the cytoplasm. In terms of biological role, responsible for the release of ribosomes from messenger RNA at the termination of protein biosynthesis. May increase the efficiency of translation by recycling ribosomes from one round of translation to another. This is Ribosome-recycling factor from Haemophilus ducreyi (strain 35000HP / ATCC 700724).